The primary structure comprises 184 residues: Cytidylate kinase (184 aa).

An ATP-binding site is contributed by 8–16 (GQPGSGKTT).

It belongs to the cytidylate kinase family. Type 2 subfamily.

The protein localises to the cytoplasm. The catalysed reaction is CMP + ATP = CDP + ADP. The enzyme catalyses dCMP + ATP = dCDP + ADP. This chain is Cytidylate kinase, found in Pyrobaculum neutrophilum (strain DSM 2338 / JCM 9278 / NBRC 100436 / V24Sta) (Thermoproteus neutrophilus).